The primary structure comprises 189 residues: RPW8-like protein 1 (189 aa).

Residues 1-153 (MPLVELLTSA…ITRQPMDIIE (153 aa)) enclose the RPW8 domain. A helical membrane pass occupies residues 7–24 (LTSAALGLSLQLLHDAII). 2 coiled-coil regions span residues 65-92 (FRKV…LKLR) and 126-147 (DIKK…ITRQ). A glycan (N-linked (GlcNAc...) asparagine) is linked at asparagine 177.

It belongs to the plant RPW8 protein family.

Its subcellular location is the membrane. Probable disease resistance (R) protein. This is RPW8-like protein 1 from Arabidopsis thaliana (Mouse-ear cress).